The following is a 1050-amino-acid chain: Self-sufficient cytochrome P450 monooxygenase CYP505E5 (1050 aa).

Residue Cys-405 coordinates heme. Positions 467–491 (RRSMLVARDGSSGESSNHLAEARGD) are disordered. The region spanning 500–641 (VSFFYGSNSG…DLEAWEETSL (142 aa)) is the Flavodoxin-like domain. FMN contacts are provided by residues 506–510 (SNSGT) and 585–617 (VFGCGHHDWTQTFYRIPILIDDLMHKAGATRLA). Positions 679–907 (KGLIEAKVTA…RPAKESFHLP (229 aa)) constitute an FAD-binding FR-type domain.

The protein in the N-terminal section; belongs to the cytochrome P450 family. Requires FAD as cofactor. FMN serves as cofactor. Heme is required as a cofactor.

It catalyses the reaction 2 oxidized [cytochrome P450] + NADPH = 2 reduced [cytochrome P450] + NADP(+) + H(+). The catalysed reaction is an organic molecule + reduced [NADPH--hemoprotein reductase] + O2 = an alcohol + oxidized [NADPH--hemoprotein reductase] + H2O + H(+). The enzyme catalyses dodecanoate + reduced [NADPH--hemoprotein reductase] + O2 = 5-hydroxydodecanoate + oxidized [NADPH--hemoprotein reductase] + H2O + H(+). It carries out the reaction tetradecanoate + reduced [NADPH--hemoprotein reductase] + O2 = 7-hydroxytetradecanoate + oxidized [NADPH--hemoprotein reductase] + H2O + H(+). It catalyses the reaction dodecan-1-ol + reduced [NADPH--hemoprotein reductase] + O2 = 1,5-dodecanediol + oxidized [NADPH--hemoprotein reductase] + H2O + H(+). The catalysed reaction is dodecan-1-ol + reduced [NADPH--hemoprotein reductase] + O2 = 1,4-dodecanediol + oxidized [NADPH--hemoprotein reductase] + H2O + H(+). The enzyme catalyses dodecan-1-ol + reduced [NADPH--hemoprotein reductase] + O2 = 1,6-dodecanediol + oxidized [NADPH--hemoprotein reductase] + H2O + H(+). Self-sufficient cytochrome P450 monooxygenase that catalyzes the regioselective in-chain hydroxylation of alkanes, fatty alcohols, and fatty acids at the omega-7 position. Performs hydroxylation of C10-C16 n-alkanes and C12 and C14 fatty alcohols; and thereby enables the one step biocatalytic synthesis of rare alcohols such as 5-dodecanol and 7-tetradecanol. Converts 1-dodecanol into 1,5-dodecanediol as major product with very little sub-terminally hydroxylated products with the 1,4-dodecanediol and 1,6-dodecanediol more abundant. Converts dodecanoic acid to 5-hydroxydodecanoic acid which can be further converted into delta-dodecalactone by lactonization of the 5-hydroxy acid at low pH. Also gives sub-terminal hydroxylation of dodecanoic acid with 9-hydroxydodecanoic acid being the second most abundant product. The protein is Self-sufficient cytochrome P450 monooxygenase CYP505E5 of Aspergillus niger.